A 365-amino-acid chain; its full sequence is Chorismate synthase (365 aa).

Residue arginine 47 coordinates NADP(+). Residues 124–126 (RAS), glycine 287, 302–306 (KPTAT), and arginine 328 contribute to the FMN site.

Belongs to the chorismate synthase family. In terms of assembly, homotetramer. FMNH2 is required as a cofactor.

It catalyses the reaction 5-O-(1-carboxyvinyl)-3-phosphoshikimate = chorismate + phosphate. It functions in the pathway metabolic intermediate biosynthesis; chorismate biosynthesis; chorismate from D-erythrose 4-phosphate and phosphoenolpyruvate: step 7/7. Functionally, catalyzes the anti-1,4-elimination of the C-3 phosphate and the C-6 proR hydrogen from 5-enolpyruvylshikimate-3-phosphate (EPSP) to yield chorismate, which is the branch point compound that serves as the starting substrate for the three terminal pathways of aromatic amino acid biosynthesis. This reaction introduces a second double bond into the aromatic ring system. The chain is Chorismate synthase from Prochlorococcus marinus (strain AS9601).